We begin with the raw amino-acid sequence, 154 residues long: MHCPFCRHPDSRVVDSRETDEGQAIRRRRSCPECGRRFTTVETAVLAVVKRSGVTEPFSREKVIRGVRRACQGRQVDDDALNKLAQQVEDAVRATGSPEVPANEVGLAILGPLRDLDEVAYLRFASVYRSFSSAEDFEREIEALRAHREVSARS.

Residues 3–34 fold into a zinc finger; it reads CPFCRHPDSRVVDSRETDEGQAIRRRRSCPEC. The region spanning 46-136 is the ATP-cone domain; it reads LAVVKRSGVT…VYRSFSSAED (91 aa).

Belongs to the NrdR family. Requires Zn(2+) as cofactor.

Negatively regulates transcription of bacterial ribonucleotide reductase nrd genes and operons by binding to NrdR-boxes. This Mycolicibacterium gilvum (strain PYR-GCK) (Mycobacterium gilvum (strain PYR-GCK)) protein is Transcriptional repressor NrdR.